The sequence spans 371 residues: UPF0284 protein tll2306 (371 aa).

It belongs to the UPF0284 family.

This chain is UPF0284 protein tll2306, found in Thermosynechococcus vestitus (strain NIES-2133 / IAM M-273 / BP-1).